The following is a 505-amino-acid chain: Lysine--tRNA ligase, heat inducible (505 aa).

N6-acetyllysine occurs at positions 114 and 156. Residues E415 and E422 each coordinate Mg(2+).

This sequence belongs to the class-II aminoacyl-tRNA synthetase family. Homodimer. Mg(2+) serves as cofactor.

It localises to the cytoplasm. The catalysed reaction is tRNA(Lys) + L-lysine + ATP = L-lysyl-tRNA(Lys) + AMP + diphosphate. This chain is Lysine--tRNA ligase, heat inducible (lysU), found in Escherichia coli O6:H1 (strain CFT073 / ATCC 700928 / UPEC).